Consider the following 260-residue polypeptide: Flap endonuclease Xni (260 aa).

A Mg(2+)-binding site is contributed by Asp-104. In terms of domain architecture, 5'-3' exonuclease spans 160–250; sequence VSPQQLTDYW…NGNLQQLRLP (91 aa). 5 residues coordinate K(+): Leu-171, Ala-172, Pro-180, Val-182, and Ile-185. The tract at residues 184-189 is interaction with DNA; it reads GIGPKS.

It belongs to the Xni family. The cofactor is Mg(2+). It depends on K(+) as a cofactor.

Its function is as follows. Has flap endonuclease activity. During DNA replication, flap endonucleases cleave the 5'-overhanging flap structure that is generated by displacement synthesis when DNA polymerase encounters the 5'-end of a downstream Okazaki fragment. The chain is Flap endonuclease Xni from Pectobacterium atrosepticum (strain SCRI 1043 / ATCC BAA-672) (Erwinia carotovora subsp. atroseptica).